The sequence spans 260 residues: Mitochondrial import inner membrane translocase subunit Tim29 (260 aa).

The N-terminal 31 residues, 1–31 (MAAAALRRFWSRRRAEAGDAVVAKPGVWARL), are a transit peptide targeting the mitochondrion. Over 32 to 59 (GSWARALLRDYAEACRDASAEARARPGR) the chain is Mitochondrial matrix. A helical membrane pass occupies residues 60–77 (AAVYVGLLGGAAACFTLA). The Mitochondrial intermembrane portion of the chain corresponds to 78–260 (PSEGAFEEAL…HSLVQAEAPR (183 aa)).

As to quaternary structure, component of the TIM22 complex, which core is composed of TIMM22, associated with TIMM10 (TIMM10A and/or TIMM10B), TIMM9, AGK and TIMM29. Interacts with TIMM10B; the interaction is direct. Interacts with TOMM40; linking the TIM22 complex to the TOM complex. Interacts with TIMM22 (when oxidized); the interaction is direct.

Its subcellular location is the mitochondrion inner membrane. Functionally, component of the TIM22 complex, a complex that mediates the import and insertion of multi-pass transmembrane proteins into the mitochondrial inner membrane. The TIM22 complex forms a twin-pore translocase that uses the membrane potential as the external driving force. Required for the stability of the TIM22 complex and functions in the assembly of the TIMM22 protein into the TIM22 complex. May facilitate cooperation between TIM22 and TOM complexes by interacting with TOMM40. The polypeptide is Mitochondrial import inner membrane translocase subunit Tim29 (Homo sapiens (Human)).